The sequence spans 74 residues: Large ribosomal subunit protein bL31 (74 aa).

Positions 16, 18, 38, and 41 each coordinate Zn(2+).

The protein belongs to the bacterial ribosomal protein bL31 family. Type A subfamily. Part of the 50S ribosomal subunit. It depends on Zn(2+) as a cofactor.

Its function is as follows. Binds the 23S rRNA. This chain is Large ribosomal subunit protein bL31, found in Streptomyces griseus subsp. griseus (strain JCM 4626 / CBS 651.72 / NBRC 13350 / KCC S-0626 / ISP 5235).